The sequence spans 437 residues: Ankyrin repeat domain-containing protein OPG015 (437 aa).

ANK repeat units lie at residues 117–146, 220–249, and 253–290; these read QDLLLYYLSNAYVEIDIVDLMVDHGAVIYK, GGRTLLYRAIYAGYIDLVSWLLENGANVNA, and NGYTCLDVAVDRGSVIARREAHLKILEILLREPLSIDC.

This sequence belongs to the orthopoxvirus OPG015 family.

Functionally, may be involved in virus-host protein interaction through the ankyrin repeats. The chain is Ankyrin repeat domain-containing protein OPG015 (OPG015) from Monkeypox virus.